We begin with the raw amino-acid sequence, 432 residues long: Glutamyl-tRNA reductase (432 aa).

Substrate contacts are provided by residues 55 to 58, Ser-114, 119 to 121, and Gln-125; these read TCNR and ETQ. Cys-56 serves as the catalytic Nucleophile. Residue 194 to 199 coordinates NADP(+); the sequence is GAGEMI.

This sequence belongs to the glutamyl-tRNA reductase family. Homodimer.

The catalysed reaction is (S)-4-amino-5-oxopentanoate + tRNA(Glu) + NADP(+) = L-glutamyl-tRNA(Glu) + NADPH + H(+). Its pathway is porphyrin-containing compound metabolism; protoporphyrin-IX biosynthesis; 5-aminolevulinate from L-glutamyl-tRNA(Glu): step 1/2. In terms of biological role, catalyzes the NADPH-dependent reduction of glutamyl-tRNA(Glu) to glutamate 1-semialdehyde (GSA). In Burkholderia cenocepacia (strain ATCC BAA-245 / DSM 16553 / LMG 16656 / NCTC 13227 / J2315 / CF5610) (Burkholderia cepacia (strain J2315)), this protein is Glutamyl-tRNA reductase.